Here is a 336-residue protein sequence, read N- to C-terminus: Holliday junction branch migration complex subunit RuvB (336 aa).

Positions 4-184 (ADRIISAIAK…FGIVQRLEFY (181 aa)) are large ATPase domain (RuvB-L). ATP is bound by residues Ile23, Arg24, Gly65, Lys68, Thr69, Thr70, 131–133 (EDY), Arg174, Tyr184, and Arg221. Residue Thr69 participates in Mg(2+) binding. A small ATPAse domain (RuvB-S) region spans residues 185–255 (SIEDLTSIVM…IAKAALAMLD (71 aa)). Residues 258 to 336 (QAGFDYLDRK…HFGLAKLADK (79 aa)) are head domain (RuvB-H). The DNA site is built by Arg294, Arg313, and Arg318.

Belongs to the RuvB family. Homohexamer. Forms an RuvA(8)-RuvB(12)-Holliday junction (HJ) complex. HJ DNA is sandwiched between 2 RuvA tetramers; dsDNA enters through RuvA and exits via RuvB. An RuvB hexamer assembles on each DNA strand where it exits the tetramer. Each RuvB hexamer is contacted by two RuvA subunits (via domain III) on 2 adjacent RuvB subunits; this complex drives branch migration. In the full resolvosome a probable DNA-RuvA(4)-RuvB(12)-RuvC(2) complex forms which resolves the HJ.

Its subcellular location is the cytoplasm. The catalysed reaction is ATP + H2O = ADP + phosphate + H(+). The RuvA-RuvB-RuvC complex processes Holliday junction (HJ) DNA during genetic recombination and DNA repair, while the RuvA-RuvB complex plays an important role in the rescue of blocked DNA replication forks via replication fork reversal (RFR). RuvA specifically binds to HJ cruciform DNA, conferring on it an open structure. The RuvB hexamer acts as an ATP-dependent pump, pulling dsDNA into and through the RuvAB complex. RuvB forms 2 homohexamers on either side of HJ DNA bound by 1 or 2 RuvA tetramers; 4 subunits per hexamer contact DNA at a time. Coordinated motions by a converter formed by DNA-disengaged RuvB subunits stimulates ATP hydrolysis and nucleotide exchange. Immobilization of the converter enables RuvB to convert the ATP-contained energy into a lever motion, pulling 2 nucleotides of DNA out of the RuvA tetramer per ATP hydrolyzed, thus driving DNA branch migration. The RuvB motors rotate together with the DNA substrate, which together with the progressing nucleotide cycle form the mechanistic basis for DNA recombination by continuous HJ branch migration. Branch migration allows RuvC to scan DNA until it finds its consensus sequence, where it cleaves and resolves cruciform DNA. The polypeptide is Holliday junction branch migration complex subunit RuvB (Actinobacillus succinogenes (strain ATCC 55618 / DSM 22257 / CCUG 43843 / 130Z)).